The chain runs to 217 residues: GTP cyclohydrolase 1 (217 aa).

C109, H112, and C180 together coordinate Zn(2+).

The protein belongs to the GTP cyclohydrolase I family. Toroid-shaped homodecamer, composed of two pentamers of five dimers.

It carries out the reaction GTP + H2O = 7,8-dihydroneopterin 3'-triphosphate + formate + H(+). Its pathway is cofactor biosynthesis; 7,8-dihydroneopterin triphosphate biosynthesis; 7,8-dihydroneopterin triphosphate from GTP: step 1/1. In Aliivibrio fischeri (strain ATCC 700601 / ES114) (Vibrio fischeri), this protein is GTP cyclohydrolase 1.